Reading from the N-terminus, the 549-residue chain is Eukaryotic translation initiation factor 3 subunit D (549 aa).

Residues 101–130 (QSYQRGRARGQRGRGARGARTPGGMTTLNK) are disordered. The span at 106–117 (GRARGQRGRGAR) shows a compositional bias: basic residues. Residues 277 to 291 (EFDLLTVNETSVEPP) form an RNA gate region. Residues 521–549 (ESDASEESGDEQADTPFAPLYSYGNSKRV) form a disordered region. Acidic residues predominate over residues 523 to 533 (DASEESGDEQA).

The protein belongs to the eIF-3 subunit D family. As to quaternary structure, component of the eukaryotic translation initiation factor 3 (eIF-3) complex.

The protein localises to the cytoplasm. Its function is as follows. mRNA cap-binding component of the eukaryotic translation initiation factor 3 (eIF-3) complex, which is involved in protein synthesis of a specialized repertoire of mRNAs and, together with other initiation factors, stimulates binding of mRNA and methionyl-tRNAi to the 40S ribosome. The eIF-3 complex specifically targets and initiates translation of a subset of mRNAs involved in cell proliferation. In the eIF-3 complex, eif3d specifically recognizes and binds the 7-methylguanosine cap of a subset of mRNAs. In Bombyx mori (Silk moth), this protein is Eukaryotic translation initiation factor 3 subunit D.